A 62-amino-acid chain; its full sequence is Large ribosomal subunit protein bL32 (62 aa).

This sequence belongs to the bacterial ribosomal protein bL32 family.

The polypeptide is Large ribosomal subunit protein bL32 (Levilactobacillus brevis (strain ATCC 367 / BCRC 12310 / CIP 105137 / JCM 1170 / LMG 11437 / NCIMB 947 / NCTC 947) (Lactobacillus brevis)).